The chain runs to 166 residues: MLLILLSVALLAFSSAQDLDEDVSQEDVPLVISDGGDSEQFIDEERQGPPLGGQQSQPSAGDGNQNDGPQQGPPQQGGQQQQGPPPPQGKPQGPPQQGGHPPPPQGRPQGPPQQGGHPRPPRGRPQGPPQQGGHQQGPPPPPPGKPQGPPPQGGRPQGPPQGQSPQ.

Residues 1–16 form the signal peptide; sequence MLLILLSVALLAFSSA. A disordered region spans residues 16–166; the sequence is AQDLDEDVSQ…QGPPQGQSPQ (151 aa). Q17 carries the pyrrolidone carboxylic acid modification. The inhibits hydroxyapatite formation, binds to hydroxyapatite and calcium stretch occupies residues 17–46; that stretch reads QDLDEDVSQEDVPLVISDGGDSEQFIDEER. S24 bears the Phosphoserine; by FAM20C mark. S33 is modified (phosphoserine; alternate). S33 and S38 each carry an O-linked (GlcA) serine; alternate glycan. Position 38 is a phosphoserine; by FAM20C; alternate (S38). Low complexity-rich tracts occupy residues 48–61 and 68–82; these read GPPL…PSAG and GPQQ…QQQQ. Composition is skewed to pro residues over residues 83–111 and 137–159; these read GPPP…PQGP.

Proteolytically cleaved; PRP-2, PRP-1, PIF-S and Db-S yield PRP-4, PRP-3 (protein A), PIF-F and Db-F, respectively. Post-translationally, a hexuronic acid was shown to be linked to Ser-33 in about 40% of the polypeptides. Neither the structure of the carbohydrate (whether glucuronic acid or an isomer of), nor the linkage (whether a glycoside or an ester) has been definitely established.

The protein localises to the secreted. PRP's act as highly potent inhibitors of crystal growth of calcium phosphates. They provide a protective and reparative environment for dental enamel which is important for the integrity of the teeth. The sequence is that of Salivary acidic proline-rich phosphoprotein 1/2 (PRH1) from Homo sapiens (Human).